We begin with the raw amino-acid sequence, 646 residues long: Esterase EstA (646 aa).

The N-terminal stretch at 1-24 is a signal peptide; that stretch reads MIRMALKPLVAACLLASLSTAPQA. Residues 25–397 lie on the Extracellular side of the membrane; that stretch reads APSPYSTLVV…DSAASGDGNG (373 aa). Ser38 functions as the Nucleophile in the catalytic mechanism. Active-site residues include Asp310 and His313. The 281-residue stretch at 366–646 folds into the Autotransporter domain; the sequence is QNVGQWRGFV…SVSLALSLDF (281 aa). Residues 398-408 traverse the membrane as a beta stranded segment; that stretch reads YNLTLGGSYRI. Over 409-410 the chain is Periplasmic; it reads DE. A beta stranded membrane pass occupies residues 411 to 421; it reads AWRAGVAAGFY. Over 422–437 the chain is Extracellular; sequence RQKLEAGAKDSDYRMN. The beta stranded transmembrane segment at 438–447 threads the bilayer; sequence SYMASAFVQY. Topologically, residues 448–451 are periplasmic; it reads QENR. The beta stranded transmembrane segment at 452-461 threads the bilayer; sequence WWADAALTGG. Topologically, residues 462–488 are extracellular; sequence YLDYDDLKRKFALGGGERSEKGDTNGH. A beta stranded transmembrane segment spans residues 489 to 500; that stretch reads LWAFSARLGYDI. Over 501–507 the chain is Periplasmic; that stretch reads AQQADSP. The beta stranded transmembrane segment at 508-518 threads the bilayer; the sequence is WHLSPFVSADY. The Extracellular portion of the chain corresponds to 519 to 547; sequence ARVEVDGYSEKGASATALDYDDQKRSSKR. The beta stranded transmembrane segment at 548–558 threads the bilayer; sequence LGAGLQGKYAF. Residues 559-561 lie on the Periplasmic side of the membrane; the sequence is GSD. The beta stranded transmembrane segment at 562-571 threads the bilayer; the sequence is TQLFAEYAHE. Over 572-605 the chain is Extracellular; the sequence is REYEDDTQDLTMSLNSLPGNRFTLEGYTPQDHLN. Residues 606–615 form a beta stranded membrane-spanning segment; it reads RVSLGFSQKL. Residues 616 to 618 lie on the Periplasmic side of the membrane; it reads APE. A beta stranded transmembrane segment spans residues 619–628; the sequence is LSLRGGYNWR. The Extracellular segment spans residues 629–636; sequence KGEDDTQQ. The chain crosses the membrane as a beta stranded span at residues 637–646; it reads SVSLALSLDF.

It belongs to the 'GDSL' lipolytic enzyme family.

The protein localises to the cell outer membrane. It catalyses the reaction a carboxylic ester + H2O = an alcohol + a carboxylate + H(+). In terms of biological role, esterase whose enzymatic activity is required for rhamnolipid production, all kinds of cell motility (swimming, swarming, and twitching), and biofilm formation; the exact role of EstA in these processes is unclear. In vitro, has pronounced esterase activities towards p-nitrophenyl esters of short acyl chain length (C4-C6) and Tween detergents. Also shows relatively high activity towards beta-naphthyl butyrate, whereas its activities towards triacylglycerols and acyls-CoA are negligible. The chain is Esterase EstA (estA) from Pseudomonas aeruginosa (strain ATCC 15692 / DSM 22644 / CIP 104116 / JCM 14847 / LMG 12228 / 1C / PRS 101 / PAO1).